A 119-amino-acid chain; its full sequence is Large ribosomal subunit protein uL18 (119 aa).

It belongs to the universal ribosomal protein uL18 family. In terms of assembly, part of the 50S ribosomal subunit; part of the 5S rRNA/L5/L18/L25 subcomplex. Contacts the 5S and 23S rRNAs.

In terms of biological role, this is one of the proteins that bind and probably mediate the attachment of the 5S RNA into the large ribosomal subunit, where it forms part of the central protuberance. The polypeptide is Large ribosomal subunit protein uL18 (Tropheryma whipplei (strain TW08/27) (Whipple's bacillus)).